Reading from the N-terminus, the 1002-residue chain is DNA-directed RNA polymerase 1B, mitochondrial (1002 aa).

A mitochondrion-targeting transit peptide spans 1–21; it reads MWRYISKHAYSRKFRNSHDSA. Residues Asp703, Lys778, and Asp935 contribute to the active site.

It belongs to the phage and mitochondrial RNA polymerase family.

Its subcellular location is the mitochondrion. It catalyses the reaction RNA(n) + a ribonucleoside 5'-triphosphate = RNA(n+1) + diphosphate. In terms of biological role, DNA-dependent RNA polymerase catalyzes the transcription of DNA into RNA using the four ribonucleoside triphosphates as substrates. This is DNA-directed RNA polymerase 1B, mitochondrial (RPOT1-TOM) from Nicotiana tabacum (Common tobacco).